The primary structure comprises 1455 residues: MELPKEMEEYFEMLQREIDKAYEIAKKARAQGKDPSLDVEIPQATDMAGRVESLVGPPGVAKRIRELVKEYGKEIAALKIVDEIIEGKFGDLGSREKYAEQAVRTALAILTEGIVSAPIEGIANVKIKRNTWADNSEYLALYYAGPIRSSGGTAQALSVLVGDYVRRKLGLDRFKPSEKHIERMVEEVDLYHRAVTRLQYHPSPEEVRLAMRNIPIEITGEATDDVEVSHRDVPGVETNQLRGGAILVLAEGVLQKAKKLVKYIDKMGIEGWEWLKEFVEAKEKGEPKEEGKEESLAESTLEETKVEVDMGFYYSLYQKFKEEIAPSDKYAKEVIGGRPLFSDPSKPGGFRLRYGRSRASGFATWGINPATMILVDEFLAIGTQLKTERPGKGAVVTPVTTIEGPIVKLKDGSVLRVDDYNLALKVREDVEEILYLGDAVIAFGDFVENNQTLLPANYCEEWWILEFVKALKEIYEVHLEPFTENEEESIEEASDYLEIDPEFLKEMLRDPLRVKPPVELAIHFSEVLGIPLHPYYTLYWNSVEPKDVEKLWRLLKNYAEIEWSNFRGIKFAKKIVISQEKLGDSKRTLELLGLPHTVRDGNVIVDYPWAAALLTPLGNLNWEFMAKPLYATIDIINENNEIKLRDRGISWIGARMGRPEKAKERKMKPPVQVLFPIGLAGGSSRDIKKAAEEGKVAEVEIAFFKCPKCGHVGPEHLCPNCGTRKELLWVCPRCNAEYPESQAEGYNYTCPKCNVKLRPYAKRKIRPSELLNRAMENVKVYGVDKLKGVMGMTSGWKMPEPLEKGLLRAKNDVYVFKDGTIRFDATDAPITHFRPREIGVSVEKLRELGYTHDFEGKPLVSEDQIVELKPQDIILSKEAGRYLLKVAKFVDDLLEKFYGLPRFYNAEKMEDLIGHLVIGLAPHTSAGIVGRIIGFVDALVGYAHPYFHAAKRRNCFPGDTRILVQIDGVPQKITLRELYELFEDERYENMVYVRKKPKREIKVYSIDLETGKVVLTDIEDVIKAPATDHLIRFELEDGRSFETTVDHPVLVYENGRFIEKRAFEVKEGDKVLVSELELVEQSSSSQDNPKNENLGSPEHDQLLEIKNIKYVRANDDFVFSLNAKKYHNVIINENIVTHQCDGDEDAVMLLLDALLNFSRYYLPEKRGGKMDAPLVITTRLDPREVDSEVHNMDIVRYYPLEFYEATYELKSPKELVGVIERVEDRLGKPEMYYGLKFTHDTDDIALGPKMSLYKQLGDMEEKVRRQLEVAKRIRAVDEHGVAEKILNSHLIPDLRGNLRSFTRQEFRCVKCNTKFRRPPLNGKCPVCGGKIVLTVSKGAIEKYLGTAKMLVTEYNVKNYTRQRICLTERDIDSLFENVFPETQLTLIVNPNDICQRLVMARTGEVNKSGLLENLSNGSKKTEKAEKAEKPRKKSDEKPKKKRVISLEEFFSRKSK.

Positions 1409–1440 (GLLENLSNGSKKTEKAEKAEKPRKKSDEKPKK) are disordered. Positions 1419 to 1438 (KKTEKAEKAEKPRKKSDEKP) are enriched in basic and acidic residues.

The protein belongs to the archaeal DNA polymerase II family. As to quaternary structure, heterodimer of a large subunit and a small subunit. Post-translationally, this protein undergoes a protein self splicing that involves a post-translational excision of the intervening region (intein) followed by peptide ligation.

The enzyme catalyses DNA(n) + a 2'-deoxyribonucleoside 5'-triphosphate = DNA(n+1) + diphosphate. It catalyses the reaction Exonucleolytic cleavage in the 3'- to 5'-direction to yield nucleoside 5'-phosphates.. In terms of biological role, possesses two activities: a DNA synthesis (polymerase) and an exonucleolytic activity that degrades single-stranded DNA in the 3'- to 5'-direction. Has a template-primer preference which is characteristic of a replicative DNA polymerase. The polypeptide is DNA polymerase II large subunit (polC) (Pyrococcus abyssi (strain GE5 / Orsay)).